Here is a 213-residue protein sequence, read N- to C-terminus: RNA polymerase I subunit H (213 aa).

Positions 1–19 (MVERMKKDTGDETKTKVQE) are enriched in basic and acidic residues. The segment at 1 to 70 (MVERMKKDTG…AREFTDKPWR (70 aa)) is disordered. The segment covering 21–31 (PPSPSPPPPPP) has biased composition (pro residues). Composition is skewed to basic and acidic residues over residues 43–53 (VPEREKKQIER) and 60–69 (HAREFTDKPW).

In terms of tissue distribution, expressed during spermatogenesis, initially at pachytene stage with abundance increasing in round spermatids and decreasing again during spermatid elongation.

May be involved in male sterility. In Mus musculus (Mouse), this protein is RNA polymerase I subunit H.